Consider the following 348-residue polypeptide: L-threonine 3-dehydrogenase (348 aa).

Cys-42 provides a ligand contact to Zn(2+). Residues Thr-44 and His-47 each act as charge relay system in the active site. Positions 67, 68, 97, 100, 103, and 111 each coordinate Zn(2+). Residues Leu-179, Glu-199, Arg-204, 266–268, and 291–292 contribute to the NAD(+) site; these read LGL and IT.

Belongs to the zinc-containing alcohol dehydrogenase family. Homotetramer. Requires Zn(2+) as cofactor.

The protein resides in the cytoplasm. It carries out the reaction L-threonine + NAD(+) = (2S)-2-amino-3-oxobutanoate + NADH + H(+). It functions in the pathway amino-acid degradation; L-threonine degradation via oxydo-reductase pathway; glycine from L-threonine: step 1/2. Functionally, catalyzes the NAD(+)-dependent oxidation of L-threonine to 2-amino-3-ketobutyrate. To a lesser extent, also catalyzes the oxidation of L-serine, D-threonine, butan-2,3-diol, butan-1,2-diol, and propan-1,2-diol and cannot oxidize other L-amino acids. Cannot utilize NADP(H) instead of NAD(H). The protein is L-threonine 3-dehydrogenase of Pyrococcus furiosus (strain ATCC 43587 / DSM 3638 / JCM 8422 / Vc1).